Here is a 427-residue protein sequence, read N- to C-terminus: UDP-N-acetylglucosamine 1-carboxyvinyltransferase 1 (427 aa).

K23–N24 contacts phosphoenolpyruvate. A UDP-N-acetyl-alpha-D-glucosamine-binding site is contributed by R96. Catalysis depends on C120, which acts as the Proton donor. C120 bears the 2-(S-cysteinyl)pyruvic acid O-phosphothioketal mark. UDP-N-acetyl-alpha-D-glucosamine-binding positions include R125–L129, D309, and V331.

Belongs to the EPSP synthase family. MurA subfamily.

The protein localises to the cytoplasm. It catalyses the reaction phosphoenolpyruvate + UDP-N-acetyl-alpha-D-glucosamine = UDP-N-acetyl-3-O-(1-carboxyvinyl)-alpha-D-glucosamine + phosphate. It participates in cell wall biogenesis; peptidoglycan biosynthesis. Its function is as follows. Cell wall formation. Adds enolpyruvyl to UDP-N-acetylglucosamine. The chain is UDP-N-acetylglucosamine 1-carboxyvinyltransferase 1 from Streptococcus pneumoniae (strain ATCC BAA-255 / R6).